The following is a 513-amino-acid chain: Cytochrome P450 monooxygenase eqxH (513 aa).

A helical transmembrane segment spans residues 13 to 32 (QYAILCGITVFTLFIVQLSL). N-linked (GlcNAc...) asparagine glycans are attached at residues Asn-130 and Asn-295. Cys-449 serves as a coordination point for heme.

The protein belongs to the cytochrome P450 family. Heme serves as cofactor.

It localises to the membrane. The protein operates within mycotoxin biosynthesis. Functionally, cytochrome P450 monooxygenase; part of the gene cluster that mediates the biosynthesis of equisetin, a trans-fused decalin-containing tetramic acid with antimicrobial activity. The PKS module of eqxS together with the enoylreductase eqxC catalyze the formation of the polyketide unit which is then conjugated to L-serine by the condensation domain of the eqxS NRPS module. Activity of the Dieckmann cyclase domain (RED) results in release of the Dieckmann product intermediate. Diels-Alderase eqx3 is involved in endo-selective Diels-Alder cycloaddition to form the decalin ring, leading to the production of N-desmethylequisetin also called trichosetin. Subsequent N-methylation is carried out by eqxD to give equisetin. In Fusarium heterosporum, this protein is Cytochrome P450 monooxygenase eqxH.